Consider the following 390-residue polypeptide: Glutamyl-tRNA reductase (390 aa).

Substrate-binding positions include 46-49 (TCNR), Ser-96, 101-103 (EAQ), and Gln-107. Catalysis depends on Cys-47, which acts as the Nucleophile. 176 to 181 (GAGEMA) is a binding site for NADP(+).

Belongs to the glutamyl-tRNA reductase family. As to quaternary structure, homodimer.

The catalysed reaction is (S)-4-amino-5-oxopentanoate + tRNA(Glu) + NADP(+) = L-glutamyl-tRNA(Glu) + NADPH + H(+). The protein operates within porphyrin-containing compound metabolism; protoporphyrin-IX biosynthesis; 5-aminolevulinate from L-glutamyl-tRNA(Glu): step 1/2. In terms of biological role, catalyzes the NADPH-dependent reduction of glutamyl-tRNA(Glu) to glutamate 1-semialdehyde (GSA). The sequence is that of Glutamyl-tRNA reductase from Thermus thermophilus (strain ATCC BAA-163 / DSM 7039 / HB27).